The following is a 473-amino-acid chain: Phosphatidylserine synthase 1 (473 aa).

Position 2 is an N-acetylalanine (A2). Topologically, residues 2-35 (ASCVGSRTLSKDDVNYKMHFRMINEQQVEDITID) are cytoplasmic. The chain crosses the membrane as a helical span at residues 36–56 (FFYRPHTITLLSFTIVSLMYF). The Lumenal portion of the chain corresponds to 57–72 (AFTRDDSVPEDNIWRG). A helical transmembrane segment spans residues 73-93 (ILSVIFFFLIISVLAFPNGPF). Residues 94-102 (TRPHPALWR) lie on the Cytoplasmic side of the membrane. A helical membrane pass occupies residues 103-123 (MVFGLSVLYFLFLVFLLFLNF). Topologically, residues 124–186 (EQVKSLMYWL…AMKALLIRSY (63 aa)) are lumenal. Residues 187-207 (GLCWTISITWELTELFFMHLL) traverse the membrane as a helical segment. Topologically, residues 208-216 (PNFAECWWD) are cytoplasmic. The chain crosses the membrane as a helical span at residues 217–237 (QVILDILLCNGGGIWLGMVVC). Residues 238-286 (RFLEMRTYHWASFKDIHTTTGKIKRAVLQFTPASWTYVRWFDPKSSFQR) lie on the Lumenal side of the membrane. A helical transmembrane segment spans residues 287-307 (VAGIYLFMIIWQLTELNTFFL). The Cytoplasmic segment spans residues 308–319 (KHIFVFQASHPL). The chain crosses the membrane as a helical span at residues 320 to 342 (SWCRILFIGGITAPTVRQYYAYL). The Lumenal segment spans residues 343 to 355 (TDTQCKRVGTQCW). Residues 356 to 376 (VFGVIGFLEAIVCIKFGQDLF) form a helical membrane-spanning segment. At 377-383 (SKTQILY) the chain is on the cytoplasmic side. The chain crosses the membrane as a helical span at residues 384–404 (VVLWLLCVAFTTFLCLYGMVW). Residues 405 to 473 (YAEHYGHREK…SKVTNGVGKK (69 aa)) lie on the Lumenal side of the membrane. Residues S417, S425, and S454 each carry the phosphoserine modification. The segment at 427–473 (DISWPHGKGSKGSEDGPHKHPGNSESHSSRRRNRHSKSKVTNGVGKK) is disordered. A compositionally biased stretch (basic residues) spans 455 to 464 (SRRRNRHSKS).

Belongs to the phosphatidyl serine synthase family.

The protein resides in the endoplasmic reticulum membrane. The enzyme catalyses a 1,2-diacyl-sn-glycero-3-phosphoethanolamine + L-serine = a 1,2-diacyl-sn-glycero-3-phospho-L-serine + ethanolamine. It catalyses the reaction a 1,2-diacyl-sn-glycero-3-phosphocholine + L-serine = a 1,2-diacyl-sn-glycero-3-phospho-L-serine + choline. The protein operates within phospholipid metabolism; phosphatidylserine biosynthesis. Functionally, catalyzes a base-exchange reaction in which the polar head group of phosphatidylethanolamine (PE) or phosphatidylcholine (PC) is replaced by L-serine. Catalyzes mainly the conversion of phosphatidylcholine but also converts, in vitro and to a lesser extent, phosphatidylethanolamine. This chain is Phosphatidylserine synthase 1 (PTDSS1), found in Bos taurus (Bovine).